The following is a 347-amino-acid chain: GMP reductase (347 aa).

NADP(+) is bound at residue 108–131 (ADFEKTKQILDLNSALNFVCIDVA). Residues Gly181 and Gly183 each coordinate K(+). Cys186 serves as the catalytic Thioimidate intermediate. 216–239 (IVSDGGCTTPGDVAKAFGGGADFV) serves as a coordination point for NADP(+).

The protein belongs to the IMPDH/GMPR family. GuaC type 1 subfamily. Homotetramer.

The catalysed reaction is IMP + NH4(+) + NADP(+) = GMP + NADPH + 2 H(+). In terms of biological role, catalyzes the irreversible NADPH-dependent deamination of GMP to IMP. It functions in the conversion of nucleobase, nucleoside and nucleotide derivatives of G to A nucleotides, and in maintaining the intracellular balance of A and G nucleotides. This Escherichia coli O81 (strain ED1a) protein is GMP reductase.